A 623-amino-acid polypeptide reads, in one-letter code: MRLLLWWVLVLSLFLNPLRAVEEHETDAVDLFLIFNQINQLNQVIETYKKNPERSAEISLYNTQKNDLIKSLTSKVLNERDKIGIDINQNLKEQEKIKKRLSKSINGDDFYTFMKDRLSLDILLIDEILYRFIDKIRSSIDIFSEQKDVESISDAFLLRLGQFKLYTFPKNLGNVKMHELEQMFSDYELRLNTYTEVLRYIKNHPKEVLPKNLIMEVNMDFVLNKISKVLPFTTHSLQVSKIVLALTILALLLGLRKLITWLLALLLDRIFEIMQRNKKMHVNVQKSIVSPVSVFLALFSCDVALDIFYYPNASPPKVSMWVGAVYIMLLAWLVIALFKGYGEALVTNMATKSTHNFRKEVINLILKVVYFLIFIVALLGVLKQLGFNVSAIIASLGIGGLAVALAVKDVLANFFASVILLLDNSFSQGDWIVCGEVEGTVVEMGLRRTTIRAFDNALLSVPNSELAGKPIRNWSRRKVGRRIKMEIGLTYSSSQSALQLCVKDIKEMLENHPKIANGADSALQNVSDYRYMFKKDIVSIDDFLGYKNNLFVFLDQFADSSINILVYCFSKTVVWEEWLEVKEDVMLKIMGIVEKHHLSFAFPSQSLYVESLPEVSLKEGAKI.

5 consecutive transmembrane segments (helical) span residues 242–262 (IVLA…ITWL), 288–308 (IVSP…LDIF), 318–338 (VSMW…IALF), 361–381 (VINL…LLGV), and 387–407 (FNVS…ALAV).

The protein belongs to the MscS (TC 1.A.23) family.

Its subcellular location is the cell membrane. This is an uncharacterized protein from Helicobacter pylori (strain ATCC 700392 / 26695) (Campylobacter pylori).